The primary structure comprises 289 residues: Nodulation protein NolT (289 aa).

The N-terminal stretch at 1–33 (MFGSAHGDTTSSDTSGRRPLRLVVLPLLLALSS) is a signal peptide. Residue C34 is the site of N-palmitoyl cysteine attachment. Residue C34 is the site of S-diacylglycerol cysteine attachment. The helical transmembrane segment at 233–253 (VAVGVSAAVFAVTCYLLFIVL) threads the bilayer.

It belongs to the YscJ lipoprotein family.

The protein resides in the cell outer membrane. This chain is Nodulation protein NolT (nolT), found in Sinorhizobium fredii (strain NBRC 101917 / NGR234).